The following is a 245-amino-acid chain: Endo-chitosanase (245 aa).

An N-terminal signal peptide occupies residues 1–17 (MHFAGIVAIALATGATA).

Belongs to the glycosyl hydrolase 75 family.

The protein localises to the secreted. The catalysed reaction is Endohydrolysis of beta-(1-&gt;4)-linkages between D-glucosamine residues in a partly acetylated chitosan.. Functionally, chitosanase catalyzing the endo-type cleavage of chitosan, the deacylated form of chitin. Chitosanase may be crucial in the degradation of the deacetylated portion of chitin in the fungal cell wall. Chitoolisaccharides produced by the hydrolysis of partially N-acetylated chitosan are known to have many biological activities, including antibacterial activity, immune-enhancing effects, and elicitor activity. This chain is Endo-chitosanase (csn), found in Aspergillus oryzae (strain ATCC 42149 / RIB 40) (Yellow koji mold).